The following is a 53-amino-acid chain: Small polypeptide DEVIL 16 (53 aa).

Asparagine 6 is a glycosylation site (N-linked (GlcNAc...) asparagine). The required for DVL/RTFL small polypeptide activity stretch occupies residues 14–45 (TFGQKCSHVVKKQRAKFYILRRCIAMLVCWHD). Residues 30 to 46 (FYILRRCIAMLVCWHDQ) form a helical membrane-spanning segment.

Belongs to the DVL/RTFL small polypeptides family. As to expression, mostly expressed in stems, flower buds, flowers and seedling shoots, to a lesser extent, in roots and young cauline leaves, but not in mature rosette leaves. Barely observed in cotyledons and leaf primordia.

It is found in the cell membrane. Small polypeptide acting as a regulatory molecule which coordinates cellular responses required for differentiation, growth and development, probably by restricting polar cell proliferation in lateral organs (e.g. leaves) and coordinating socket cell recruitment and differentiation at trichome sites. Regulates the positional cue and cell proliferation along the body axis. The chain is Small polypeptide DEVIL 16 from Arabidopsis thaliana (Mouse-ear cress).